A 481-amino-acid chain; its full sequence is 3-isopropylmalate dehydratase large subunit (481 aa).

C357, C417, and C420 together coordinate [4Fe-4S] cluster. Polar residues predominate over residues 429–441; the sequence is SPGQRCASTSNRN. The segment at 429–451 is disordered; it reads SPGQRCASTSNRNFEGRQGKGGR.

Belongs to the aconitase/IPM isomerase family. LeuC type 1 subfamily. In terms of assembly, heterodimer of LeuC and LeuD. The cofactor is [4Fe-4S] cluster.

The enzyme catalyses (2R,3S)-3-isopropylmalate = (2S)-2-isopropylmalate. It participates in amino-acid biosynthesis; L-leucine biosynthesis; L-leucine from 3-methyl-2-oxobutanoate: step 2/4. Functionally, catalyzes the isomerization between 2-isopropylmalate and 3-isopropylmalate, via the formation of 2-isopropylmaleate. The protein is 3-isopropylmalate dehydratase large subunit of Mycobacterium sp. (strain JLS).